A 198-amino-acid chain; its full sequence is Protein XA-1 (198 aa).

The N-terminal stretch at 1–18 (MFFYVLLLALMAQGWSLP) is a signal peptide. The segment at 17-198 (LPQGKTGEDS…KHGQEQGKKH (182 aa)) is disordered. A compositionally biased stretch (pro residues) spans 29 to 44 (FRPPSPPMGPSLPPPV). Basic and acidic residues predominate over residues 46 to 59 (HDLHRPSGHPEEFR). Residues 76 to 86 (GRPKRDLHHGK) show a composition bias toward basic residues. The segment covering 95–104 (HTGEVLHHTD) has biased composition (basic and acidic residues). The segment covering 134–145 (HGRHRRDLHHGK) has biased composition (basic residues). Positions 181–198 (NSSEEKRPKHGQEQGKKH) are enriched in basic and acidic residues.

In terms of tissue distribution, expressed in the periphery of the cement gland as well as in the region of the hatching gland.

The protein resides in the secreted. In Xenopus laevis (African clawed frog), this protein is Protein XA-1.